The following is a 166-amino-acid chain: MYCPFCRNPDSRVVDSRMADDGSSIRRRRQCPECGRRFTTVETTSLSVIKRSGVGEPFSRIKVISGVRKACQGRPVTEDDLAMLAQEVEENIRSSGAAEIDAHEVGLAILGPLRKLDEVAYLRFASVYQAFESLEDFESAISLLRHEAEAAKAGAKKATGSEKSQL.

A zinc finger lies at cysteine 3–cysteine 34. Positions leucine 46–aspartate 136 constitute an ATP-cone domain.

The protein belongs to the NrdR family. It depends on Zn(2+) as a cofactor.

Its function is as follows. Negatively regulates transcription of bacterial ribonucleotide reductase nrd genes and operons by binding to NrdR-boxes. The sequence is that of Transcriptional repressor NrdR from Paenarthrobacter aurescens (strain TC1).